A 79-amino-acid polypeptide reads, in one-letter code: Putative membrane protein insertion efficiency factor (79 aa).

It belongs to the UPF0161 family.

It is found in the cell inner membrane. Its function is as follows. Could be involved in insertion of integral membrane proteins into the membrane. This Bacteroides thetaiotaomicron (strain ATCC 29148 / DSM 2079 / JCM 5827 / CCUG 10774 / NCTC 10582 / VPI-5482 / E50) protein is Putative membrane protein insertion efficiency factor.